The primary structure comprises 1282 residues: MAVPVEEAIAALSTFSLEDEQPEVQGPAVMVSAERAATDSPIEYSDVAAYRLSLSEDTKALNQLNTLIQEGKEMASILYTYRSCVKALPQLPESMKHSQADLYLETYQVLDLEMSRLREIQRWQSSASAKLAADMQRFSRPERRINGPTVTHLWSMLKLLDVLVQLDHLKNAKASIPNDFSWYKRTFTQVSAQWQDTDTMREELDDLQIFLSTRWAILLNLHVEMFRVNNVEDILQVLIVFIVESLELDFALLFPERYILLRVLPVLVVLATPSEKDTEALYKRVKLNRLINIFKNDPVIPAFPDLHLSPAAILKELSVYFQKFSSQTRLLTLPAPHELPPREALEYQRHYLIVNHIGALRAEHDDFTIRFASSMNQLLLLKSNDGAYTEWCREVKGNMYDMVVEGFQLLSRWTARIWEQCAWKFSRPCRDAGETPEASGSYSDYEKVVRFNYTAEERKALVELVGYIKSVGSMLQRCDTLVADALWETIHAEVQDFVQNTLATMLRTTFRKKKDLSRILSDMRTLSADWMANTRPEHEMPSSQHGNDESRGNFFYPRPVAPTAAQVHCLQFLIYEVVSGGNLRRPGGFFGNNGSEIPVNDLKQLETFFYKLSFFLHILDYSASIGILTDLGFLWFREFYLESSRVIQFPIECSLPWMLIDYILEAQNSGLLESVLLPFDIYNDSAQQALVVLRQRFLYDEIEAEVDHGFDIFVSRLSESIFTYYKSWSASELLDPSFLFALDNGEKFSIQPVRFTALFKMTKVKILGRTINLRSLIAQRMNRIFRENLEFLFDRFESQDLCAVVELEKLIDILKHSHELLSQDLSIDPFSLMLNEMQENISLVSFSSRLATQIWSEMQSDFLPNFILCNTTQRFVRSSKVPPTQKPSVPSAKPSFYCGTQDLNAAHQSFARLHSGFFGIPHLFSIVKLLGSRSLPWLIRALLDHISNKITTLEPMISGLQEALPKSIGLLSFDGGVTGCMKLIREQLNWGTKSELKSEVLRGIKEIGSVIYTMGLLDIVLREVDTKRFMQTAPWLGLIPGAEGQIVNAQDGESPLVNLLKSATSAVVSSPGCLNPAAFYTMSKQAEAADLLYKANMNGGSVLEYTLAFTSASLDKYCSKWSAPPKTGFVDITTSKDFYRIYGGLQIGYLEEITAPQSAQHEVLGDSIAWGGCTIIYLLGQQLHFELFDFSYQVLNVSEVETVSASHTHRNPQIHQGWEGLLEGMKKARRLNNHVFSMLKARCPLEDKTACAIKQSGAPLPRVRFENTVSAFETLPQKGTVG.

Binds NAP1 and ROP2, but not ROP8. In terms of tissue distribution, expressed in roots, root hairs, hypocotyls, cotyledons, stems, leaves, trichomes and flowers.

Involved in regulation of actin and microtubule organization. Part of a WAVE complex that activates the ARP2/3 complex. Interacts with the active form of RHO-family GTPases. In Arabidopsis thaliana (Mouse-ear cress), this protein is Protein PIR (PIR).